We begin with the raw amino-acid sequence, 239 residues long: Pyridoxine 5'-phosphate synthase (239 aa).

N7 serves as a coordination point for 3-amino-2-oxopropyl phosphate. 9–10 is a binding site for 1-deoxy-D-xylulose 5-phosphate; it reads DH. Position 18 (R18) interacts with 3-amino-2-oxopropyl phosphate. The Proton acceptor role is filled by H43. The 1-deoxy-D-xylulose 5-phosphate site is built by R45 and H50. The Proton acceptor role is filled by E70. Residue T100 participates in 1-deoxy-D-xylulose 5-phosphate binding. Catalysis depends on H191, which acts as the Proton donor. 3-amino-2-oxopropyl phosphate contacts are provided by residues G192 and 213 to 214; that span reads GH.

This sequence belongs to the PNP synthase family. Homooctamer; tetramer of dimers.

It localises to the cytoplasm. It catalyses the reaction 3-amino-2-oxopropyl phosphate + 1-deoxy-D-xylulose 5-phosphate = pyridoxine 5'-phosphate + phosphate + 2 H2O + H(+). It participates in cofactor biosynthesis; pyridoxine 5'-phosphate biosynthesis; pyridoxine 5'-phosphate from D-erythrose 4-phosphate: step 5/5. Catalyzes the complicated ring closure reaction between the two acyclic compounds 1-deoxy-D-xylulose-5-phosphate (DXP) and 3-amino-2-oxopropyl phosphate (1-amino-acetone-3-phosphate or AAP) to form pyridoxine 5'-phosphate (PNP) and inorganic phosphate. The chain is Pyridoxine 5'-phosphate synthase from Pelobacter propionicus (strain DSM 2379 / NBRC 103807 / OttBd1).